We begin with the raw amino-acid sequence, 482 residues long: Exodeoxyribonuclease I (482 aa).

Residues 13–194 form the Exonuclease domain; that stretch reads LFYDYETFGI…TSDVYATIEL (182 aa). Positions 16, 18, and 187 each coordinate Mg(2+). Substrate is bound at residue E18. An ExoI SH3-like domain is found at 203–351; the sequence is PKLFDFFFKY…LVKNVLLKKN (149 aa). The ExoI C-terminal domain maps to 355 to 471; that stretch reads NSLNVDLQIY…DLLKYVFKKY (117 aa).

Monomer. Interacts with ssb (via C-terminus); this interaction stimulates the exonuclease activity by recruiting the enzyme to its substrate. Mg(2+) is required as a cofactor.

It catalyses the reaction Exonucleolytic cleavage in the 3'- to 5'-direction to yield nucleoside 5'-phosphates.. Degrades single-stranded DNA (ssDNA) in a highly processive manner. Also functions as a DNA deoxyribophosphodiesterase that releases deoxyribose-phosphate moieties following the cleavage of DNA at an apurinic/apyrimidinic (AP) site by either an AP endonuclease or AP lyase. The protein is Exodeoxyribonuclease I (sbcB) of Buchnera aphidicola subsp. Schizaphis graminum (strain Sg).